Consider the following 478-residue polypeptide: Glutamate--tRNA ligase (478 aa).

The 'HIGH' region signature appears at 23-33; it reads PSPTGFIHLGN. Residues 130–145 show a composition bias toward basic and acidic residues; it reads KQKPRYDGTWRPEEGK. Positions 130-153 are disordered; sequence KQKPRYDGTWRPEEGKTLPPVPEG. Positions 255–259 match the 'KMSKS' region motif; that stretch reads KMSKR. Position 258 (lysine 258) interacts with ATP.

The protein belongs to the class-I aminoacyl-tRNA synthetase family. Glutamate--tRNA ligase type 1 subfamily. Monomer.

The protein localises to the cytoplasm. It catalyses the reaction tRNA(Glu) + L-glutamate + ATP = L-glutamyl-tRNA(Glu) + AMP + diphosphate. Catalyzes the attachment of glutamate to tRNA(Glu) in a two-step reaction: glutamate is first activated by ATP to form Glu-AMP and then transferred to the acceptor end of tRNA(Glu). The chain is Glutamate--tRNA ligase from Paracidovorax citrulli (strain AAC00-1) (Acidovorax citrulli).